The sequence spans 981 residues: Anoctamin-3 (981 aa).

Positions 1 to 28 (MVHHSGSIQSFKQQKGMNISKSEITTEA) are enriched in polar residues. 2 disordered regions span residues 1 to 32 (MVHH…SLKP) and 67 to 87 (PTSV…EESR). The Cytoplasmic segment spans residues 1-403 (MVHHSGSIQS…LYFAWLGWYT (403 aa)). A compositionally biased stretch (basic and acidic residues) spans 76 to 87 (DKPEHVTSEESR). A helical membrane pass occupies residues 404–424 (GMLIPAAVVGLCVFFYGLVTM). N425, N448, and N455 each carry an N-linked (GlcNAc...) asparagine glycan. At 425-469 (NESQVSQEICKATEVFMCPLCDKNCSLQRLNDSCIYAKVTYLFDN) the chain is on the extracellular side. The helical transmembrane segment at 470–490 (GGTVFFAIFMAIWATVFLEFW) threads the bilayer. Over 491-550 (KRRRSILTYTWDLIEWEEEEETLRPQFEAKYYRMEVINPITGKPEPHQPSSDKVTRLLVS) the chain is Cytoplasmic. The chain crosses the membrane as a helical span at residues 551–571 (VSGIFFMISLVITAVFAVVVY). The Extracellular segment spans residues 572 to 592 (RLVVMEQFASFKWNFVKQHWQ). The helical transmembrane segment at 593-613 (FATSGAAVCINFIIIMLLNLA) threads the bilayer. Over 614–640 (YEKIAYLLTNLEYPRTESEWENSFALK) the chain is Cytoplasmic. Residues 641 to 661 (MFLFQFVNLNSSIFYIAFFLG) form a helical membrane-spanning segment. Topologically, residues 662 to 761 (RFVGHPGKYN…MDEYLEMVLQ (100 aa)) are extracellular. A helical membrane pass occupies residues 762–782 (FGFTTIFVAAFPLAPLLALLN). The Cytoplasmic segment spans residues 783–810 (NIIEIRLDAYKFVTQWRRPLPARATDIG). A helical transmembrane segment spans residues 811–831 (IWLGILEGIGILAVITNAFVI). Over 832-914 (AITSDYIPRF…QYWHILAARL (83 aa)) the chain is Extracellular. N866 carries an N-linked (GlcNAc...) asparagine glycan. A helical membrane pass occupies residues 915 to 935 (AFIIVFEHLVFGIKSFIAYLI). The Cytoplasmic portion of the chain corresponds to 936-981 (PDIPKGLRERIRREKYLVQEMMYEAELEHLQQQRRKSGQPIHHEWP).

This sequence belongs to the anoctamin family. In terms of assembly, interacts with KCNT1/Slack. In terms of tissue distribution, predominantly expressed in neuronal tissues. Expressed in brain.

The protein localises to the cell membrane. The enzyme catalyses a 1,2-diacyl-sn-glycero-3-phosphocholine(in) = a 1,2-diacyl-sn-glycero-3-phosphocholine(out). It carries out the reaction a beta-D-galactosyl-(1&lt;-&gt;1')-N-acylsphing-4-enine(out) = a beta-D-galactosyl-(1&lt;-&gt;1')-N-acylsphing-4-enine(in). Functionally, has calcium-dependent phospholipid scramblase activity; scrambles phosphatidylcholine and galactosylceramide. Does not exhibit calcium-activated chloride channel (CaCC) activity. Seems to act as potassium channel regulator and may inhibit pain signaling; can facilitate KCNT1/Slack channel activity by promoting its full single-channel conductance at very low sodium concentrations and by increasing its sodium sensitivity. The protein is Anoctamin-3 of Mus musculus (Mouse).